The following is a 59-amino-acid chain: Large ribosomal subunit protein uL30 (59 aa).

This sequence belongs to the universal ribosomal protein uL30 family. As to quaternary structure, part of the 50S ribosomal subunit.

In Psychrobacter sp. (strain PRwf-1), this protein is Large ribosomal subunit protein uL30.